Consider the following 171-residue polypeptide: Inosine/xanthosine triphosphatase (171 aa).

Residue T8–K13 coordinates substrate. A Mg(2+)-binding site is contributed by E38.

Belongs to the YjjX NTPase family. Homodimer. Requires Mg(2+) as cofactor. The cofactor is Mn(2+).

It carries out the reaction XTP + H2O = XDP + phosphate + H(+). It catalyses the reaction ITP + H2O = IDP + phosphate + H(+). Functionally, phosphatase that hydrolyzes non-canonical purine nucleotides such as XTP and ITP to their respective diphosphate derivatives. Probably excludes non-canonical purines from DNA/RNA precursor pool, thus preventing their incorporation into DNA/RNA and avoiding chromosomal lesions. The sequence is that of Inosine/xanthosine triphosphatase from Klebsiella pneumoniae (strain 342).